The following is a 203-amino-acid chain: Superoxide dismutase [Mn] (203 aa).

Residues H31, H79, D161, and H165 each contribute to the Mn(2+) site.

This sequence belongs to the iron/manganese superoxide dismutase family. Mn(2+) serves as cofactor.

The catalysed reaction is 2 superoxide + 2 H(+) = H2O2 + O2. Its function is as follows. Destroys superoxide anion radicals which are normally produced within the cells and which are toxic to biological systems. The polypeptide is Superoxide dismutase [Mn] (sod) (Haloarcula marismortui (strain ATCC 43049 / DSM 3752 / JCM 8966 / VKM B-1809) (Halobacterium marismortui)).